The primary structure comprises 289 residues: Transmembrane protein 163 (289 aa).

The interval 1–65 (MEPAAGIQRR…ESGQFSDGLE (65 aa)) is disordered. The Cytoplasmic portion of the chain corresponds to 1-88 (MEPAAGIQRR…HEAQNYRKKA (88 aa)). Serine 11 bears the Phosphoserine mark. Residues 16 to 36 (TVPPPPRGHAPPAAAPGPAPL) show a composition bias toward pro residues. Residues 42-72 (EPPQLEEERQVRISESGQFSDGLEDRGLLES) are required for interaction with MCOLN1. Serine 55, serine 57, and serine 61 each carry phosphoserine. A helical transmembrane segment spans residues 89–109 (LWVSWFSIIVTLALAVAAFTV). Topologically, residues 110–116 (SVMRYSA) are extracellular. A helical transmembrane segment spans residues 117–137 (SAFGFAFDAILDVLSSAIVLW). At 138–150 (RYSNAAAVHSAHR) the chain is on the cytoplasmic side. A helical membrane pass occupies residues 151-171 (EYIACVILGVIFLLSSICIVV). Residues 172-187 (KAIHDLSTRLLPEVDD) lie on the Extracellular side of the membrane. The helical transmembrane segment at 188 to 208 (FLFSVSILSGILCSILAVLKF) threads the bilayer. The Cytoplasmic segment spans residues 209-217 (MLGKVLTSR). The chain crosses the membrane as a helical span at residues 218-238 (ALITDGFNSLVGGVMGFSILL). Topologically, residues 239–255 (SAEVFKHDSAVWYLDGS) are extracellular. A helical transmembrane segment spans residues 256-276 (IGVLIGLTIFAYGVKLLIDMV). Residues 277-289 (PRVRQTRHYEMFE) are Cytoplasmic-facing.

This sequence belongs to the TMEM163 family. Homodimer. Interacts with MCOLN1/TRPML1. Interacts with SLC30A1, SLC30A2, SLC30A3 and SLC30A4. As to expression, widely expressed. High expression is detected in brain, lung and testis.

The protein localises to the cytoplasmic vesicle. It is found in the secretory vesicle. Its subcellular location is the synaptic vesicle membrane. The protein resides in the early endosome membrane. It localises to the late endosome membrane. The protein localises to the lysosome membrane. It is found in the cell membrane. It catalyses the reaction Zn(2+)(in) = Zn(2+)(out). Its function is as follows. Zinc ion transporter that mediates zinc efflux and plays a crucial role in intracellular zinc homeostasis. Binds the divalent cations Zn(2+), Ni(2+), and to a minor extent Cu(2+). Is a functional modulator of P2X purinoceptors, including P2RX1, P2RX3, P2RX4 and P2RX7. Plays a role in central nervous system development and is required for myelination, and survival and proliferation of oligodendrocytes. The protein is Transmembrane protein 163 (TMEM163) of Homo sapiens (Human).